The primary structure comprises 338 residues: Lipoate-protein ligase A (338 aa).

One can recognise a BPL/LPL catalytic domain in the interval 29–216 (PATQRVLFLW…AFFAHYGERV (188 aa)). ATP-binding positions include R71, 76-79 (GAVF), and K134. A (R)-lipoate-binding site is contributed by K134.

It belongs to the LplA family. As to quaternary structure, monomer.

Its subcellular location is the cytoplasm. It catalyses the reaction L-lysyl-[lipoyl-carrier protein] + (R)-lipoate + ATP = N(6)-[(R)-lipoyl]-L-lysyl-[lipoyl-carrier protein] + AMP + diphosphate + H(+). It functions in the pathway protein modification; protein lipoylation via exogenous pathway; protein N(6)-(lipoyl)lysine from lipoate: step 1/2. Its pathway is protein modification; protein lipoylation via exogenous pathway; protein N(6)-(lipoyl)lysine from lipoate: step 2/2. Its function is as follows. Catalyzes both the ATP-dependent activation of exogenously supplied lipoate to lipoyl-AMP and the transfer of the activated lipoyl onto the lipoyl domains of lipoate-dependent enzymes. The sequence is that of Lipoate-protein ligase A from Escherichia coli O6:H1 (strain CFT073 / ATCC 700928 / UPEC).